Consider the following 152-residue polypeptide: Endoribonuclease YbeY (152 aa).

Zn(2+)-binding residues include histidine 113, histidine 117, and histidine 123.

Belongs to the endoribonuclease YbeY family. The cofactor is Zn(2+).

It is found in the cytoplasm. Its function is as follows. Single strand-specific metallo-endoribonuclease involved in late-stage 70S ribosome quality control and in maturation of the 3' terminus of the 16S rRNA. In Acidovorax ebreus (strain TPSY) (Diaphorobacter sp. (strain TPSY)), this protein is Endoribonuclease YbeY.